Consider the following 204-residue polypeptide: Bcl-2-like protein 10 (204 aa).

The short motif at leucine 86–glycine 105 is the BH1 element. Residues tryptophan 118–aspartate 133 are required for Ca(2+) binding. Residues lysine 119, lysine 120, and lysine 128 each participate in a glycyl lysine isopeptide (Lys-Gly) (interchain with G-Cter in ubiquitin) cross-link. The BH2 signature appears at tryptophan 156–cysteine 167. The helical transmembrane segment at leucine 183–tryptophan 200 threads the bilayer.

The protein belongs to the Bcl-2 family. Interacts with BAX. Interacts with BCL2 and BCL2L1/BCLX. Interacts with APAF1. Interacts with ITPR1, ITPR2 and ITPR3; the interaction with ITPR1 is increased in the presence of AHCLY1. Interacts with AHCYL1. Interacts with HIP1R (via ENTH and I/LWEQ domains). Interacts with CASP9. Interacts with BCL2L11/BIM. Interacts with BIK. Interacts with UBQLN4. Interacts with NME2/NM23-H2. Interacts with PMAIP1/NOXA. Interacts with TPX2. Interacts with UBQLN1; in the cytoplasm. Interacts (via BH1 domain) with BECN1. Ca(2+) serves as cofactor. Monoubiquitinated by UBQLN1; results in stabilization of BCL2L10 protein abundance and in relocalization from mitochondria to cytoplasm. As to expression, widely expressed in adult tissues. Preferentially expressed in lung, liver and kidney.

The protein resides in the mitochondrion. Its subcellular location is the nucleus membrane. It is found in the endoplasmic reticulum. It localises to the cytoplasm. The protein localises to the cytoskeleton. The protein resides in the spindle. Promotes cell survival by suppressing apoptosis induced by BAX but not BAK. Increases binding of AHCYL1/IRBIT to ITPR1. Reduces ITPR1-mediated calcium release from the endoplasmic reticulum cooperatively with AHCYL1/IRBIT under normal cellular conditions. Under apoptotic stress conditions, dissociates from ITPR1 and is displaced from mitochondria-associated endoplasmic reticulum membranes, leading to increased Ca(2+) transfer to mitochondria which promotes apoptosis. Required for the correct formation of the microtubule organizing center during oocyte cell division, potentially via regulation of protein abundance and localization of other microtubule organizing center components such as AURKA and TPX2. The protein is Bcl-2-like protein 10 of Homo sapiens (Human).